The sequence spans 64 residues: Prokaryotic ubiquitin-like protein Pup (64 aa).

Residues 20–58 form an ARC ATPase binding region; that stretch reads QELTLAASHVVSDVSEVDDLLDEIDGLLAENAEDFVTGF. Glutamate 64 is covalently cross-linked (Isoglutamyl lysine isopeptide (Glu-Lys) (interchain with K-? in acceptor proteins)).

This sequence belongs to the prokaryotic ubiquitin-like protein family. As to quaternary structure, strongly interacts with the proteasome-associated ATPase ARC through a hydrophobic interface; the interacting region of Pup lies in its C-terminal half. There is one Pup binding site per ARC hexamer ring.

It participates in protein degradation; proteasomal Pup-dependent pathway. Functionally, protein modifier that is covalently attached to lysine residues of substrate proteins, thereby targeting them for proteasomal degradation. The tagging system is termed pupylation. The polypeptide is Prokaryotic ubiquitin-like protein Pup (Rothia mucilaginosa (strain DY-18) (Stomatococcus mucilaginosus)).